We begin with the raw amino-acid sequence, 108 residues long: Glutaredoxin-1 (108 aa).

The region spanning 3 to 106 (EEFVQQRLAN…DILSSIGVLR (104 aa)) is the Glutaredoxin domain. Cysteines 23 and 26 form a disulfide.

This sequence belongs to the glutaredoxin family.

It is found in the virion. In terms of biological role, has thioltransferase and dehydroascorbate reductase activities. The sequence is that of Glutaredoxin-1 (OPG075) from Ectromelia virus (strain Moscow) (ECTV).